A 123-amino-acid polypeptide reads, in one-letter code: NADH dehydrogenase [ubiquinone] 1 beta subcomplex subunit 7 (123 aa).

The tract at residues 1–32 (MGTKLSVSLEGASTPETAPRVDRPPTFDPQYG) is disordered. The region spanning 59–102 (RDYCAHHLISLMKCQTQNAPFAGHACDGERGAWDKCEYDDHIMR) is the CHCH domain. 2 short sequence motifs (cx9C motif) span residues 62 to 72 (CAHHLISLMKC) and 84 to 94 (CDGERGAWDKC). 2 cysteine pairs are disulfide-bonded: C62–C94 and C72–C84.

It belongs to the complex I NDUFB7 subunit family. As to quaternary structure, complex I is composed of 45 different subunits.

The protein localises to the mitochondrion. Its subcellular location is the mitochondrion inner membrane. It is found in the mitochondrion intermembrane space. Accessory subunit of the mitochondrial membrane respiratory chain NADH dehydrogenase (Complex I), that is believed not to be involved in catalysis. Complex I functions in the transfer of electrons from NADH to the respiratory chain. The immediate electron acceptor for the enzyme is believed to be ubiquinone. The protein is NADH dehydrogenase [ubiquinone] 1 beta subcomplex subunit 7 of Caenorhabditis elegans.